The following is a 523-amino-acid chain: Factor arrest protein 8 (523 aa).

Residues 26-76 (TKNERDRITWELERSEMKARIAELEGENRDLKHQLNQIQSKAVSPEGEKEE) are a coiled coil. The segment at 61–80 (NQIQSKAVSPEGEKEEKHVP) is disordered. Over residues 71 to 80 (EGEKEEKHVP) the composition is skewed to basic and acidic residues. The residue at position 115 (serine 115) is a Phosphoserine. Residue threonine 132 is modified to Phosphothreonine. The tract at residues 150 to 171 (ALLDTKPNPKQGPSESPSPTKV) is disordered. Residues 160–171 (QGPSESPSPTKV) show a composition bias toward polar residues.

As to quaternary structure, component of a complex at least composed of FAR3, FAR7, FAR8, FAR10, FAR11 and VPS64.

The protein localises to the cytoplasm. The protein resides in the endoplasmic reticulum. Participates in the control of the reentry into the cell cycle following pheromone treatment. The polypeptide is Factor arrest protein 8 (FAR8) (Saccharomyces cerevisiae (strain ATCC 204508 / S288c) (Baker's yeast)).